The chain runs to 378 residues: Protein RecA (378 aa).

79-86 (GPESSGKT) lines the ATP pocket.

The protein belongs to the RecA family.

The protein localises to the cytoplasm. Its function is as follows. Can catalyze the hydrolysis of ATP in the presence of single-stranded DNA, the ATP-dependent uptake of single-stranded DNA by duplex DNA, and the ATP-dependent hybridization of homologous single-stranded DNAs. It interacts with LexA causing its activation and leading to its autocatalytic cleavage. In Streptococcus equi subsp. zooepidemicus (strain MGCS10565), this protein is Protein RecA.